Here is a 450-residue protein sequence, read N- to C-terminus: MSNQGAIRRSGEDRISSLPDHLLSQILSNLPTENAVTTSILSTRWKDLWLSTPVLDIDIDAFDDATTFISFATRFLDSFKDSCLHKLQISFQMEAVDMWTIIPWIEDAVKRRIQHLEVDSRIDHMIDTLPLTVYLSESLVSLRLHLVMLHRFVFVSLPNLKVMHLEENIYSYAETMEKFISSCPVLEDLTVVRNVDEATEKVLRVSSQSLNSLKLVIDSSKCWYNDDSDDWKVVIDAPQLVYLSLKDDQSVSFVINNLCSSAKADIKVSFNVSDIWDLEESFERSNVGKFLTGLSSLRDMTISGTTLKIICHYLKHEPMPQFRNMTRLHAKFYVCDLEMLPCVLESCPNLKSLVLKLKGEMENEEISLSSSVPKCLQSSLENVEIIRPNYGSGEEMKLSKYFLENSLVLKKFKLCRDCHSEEQESLVVRELMTFQRCSSACEINVVRFQR.

Residues 12–58 enclose the F-box domain; the sequence is EDRISSLPDHLLSQILSNLPTENAVTTSILSTRWKDLWLSTPVLDID. 2 LRR repeats span residues 157-181 and 294-317; these read LPNL…KFIS and LSSL…LKHE. One can recognise an FBD domain in the interval 364 to 416; it reads EEISLSSSVPKCLQSSLENVEIIRPNYGSGEEMKLSKYFLENSLVLKKFKLCR.

The polypeptide is F-box/FBD/LRR-repeat protein At5g22660 (Arabidopsis thaliana (Mouse-ear cress)).